Here is a 259-residue protein sequence, read N- to C-terminus: GTP cyclohydrolase FolE2 (259 aa).

Belongs to the GTP cyclohydrolase IV family.

It carries out the reaction GTP + H2O = 7,8-dihydroneopterin 3'-triphosphate + formate + H(+). Its pathway is cofactor biosynthesis; 7,8-dihydroneopterin triphosphate biosynthesis; 7,8-dihydroneopterin triphosphate from GTP: step 1/1. In terms of biological role, converts GTP to 7,8-dihydroneopterin triphosphate. The polypeptide is GTP cyclohydrolase FolE2 (Thermosipho africanus (strain TCF52B)).